The chain runs to 355 residues: D-alanine--D-alanine ligase (355 aa).

Residues 143–350 (KTIFSNHKLP…IEQLVAKLVD (208 aa)) enclose the ATP-grasp domain. 178 to 233 (LKKLKFPVFVKPSNSGSSLGISKVKNESEILLALEKAWGIDPRILIEEGLEVREIE) serves as a coordination point for ATP. Residues aspartate 303, glutamate 317, and asparagine 319 each contribute to the Mg(2+) site.

It belongs to the D-alanine--D-alanine ligase family. Mg(2+) serves as cofactor. The cofactor is Mn(2+).

The protein resides in the cytoplasm. It catalyses the reaction 2 D-alanine + ATP = D-alanyl-D-alanine + ADP + phosphate + H(+). It functions in the pathway cell wall biogenesis; peptidoglycan biosynthesis. Functionally, cell wall formation. The chain is D-alanine--D-alanine ligase from Prochlorococcus marinus (strain MIT 9301).